A 149-amino-acid polypeptide reads, in one-letter code: Arginine repressor (149 aa).

This sequence belongs to the ArgR family.

It is found in the cytoplasm. Its pathway is amino-acid biosynthesis; L-arginine biosynthesis [regulation]. Functionally, regulates arginine biosynthesis genes. The chain is Arginine repressor from Listeria innocua serovar 6a (strain ATCC BAA-680 / CLIP 11262).